We begin with the raw amino-acid sequence, 70 residues long: Peptide BmKn2 (70 aa).

Positions 1-23 (MKSQTFFLLFLVVLLLAISQSEA) are cleaved as a signal peptide. Phe36 is subject to Phenylalanine amide. Residues 40 to 70 (SMRDMDTMKYLYDPSLSAADLKTLQKLMENY) constitute a propeptide that is removed on maturation.

This sequence belongs to the non-disulfide-bridged peptide (NDBP) superfamily. Short antimicrobial peptide (group 4) family. In terms of tissue distribution, expressed by the venom gland.

It localises to the secreted. The protein resides in the target cell membrane. Functionally, antimicrobial peptide with potent activity against bacteria. Has strong antibacterial activity against Gram-positive bacteria S.aureus, M.luteus, B.subtilis, and Gram-negative bacteria E.coli, P.aeruginosa and N.gonorrhoeae. Also shows low activity against HIV-1 PV. The protein is Peptide BmKn2 of Olivierus martensii (Manchurian scorpion).